The sequence spans 203 residues: Holliday junction branch migration complex subunit RuvA (203 aa).

The domain I stretch occupies residues 1–63 (MIGKLSGKVD…EEHMHLYGFL (63 aa)). Residues 64–142 (TLEEKIFFNL…KISSGSAIIK (79 aa)) form a domain II region. Residues 143 to 149 (ESLNIKN) are flexible linker. Positions 150 to 203 (ITPVASNEVIKALVNLGFSRFEAQNAVQGIITQNPEISIDELIKTALKNRNSNF) are domain III.

The protein belongs to the RuvA family. In terms of assembly, homotetramer. Forms an RuvA(8)-RuvB(12)-Holliday junction (HJ) complex. HJ DNA is sandwiched between 2 RuvA tetramers; dsDNA enters through RuvA and exits via RuvB. An RuvB hexamer assembles on each DNA strand where it exits the tetramer. Each RuvB hexamer is contacted by two RuvA subunits (via domain III) on 2 adjacent RuvB subunits; this complex drives branch migration. In the full resolvosome a probable DNA-RuvA(4)-RuvB(12)-RuvC(2) complex forms which resolves the HJ.

The protein resides in the cytoplasm. Its function is as follows. The RuvA-RuvB-RuvC complex processes Holliday junction (HJ) DNA during genetic recombination and DNA repair, while the RuvA-RuvB complex plays an important role in the rescue of blocked DNA replication forks via replication fork reversal (RFR). RuvA specifically binds to HJ cruciform DNA, conferring on it an open structure. The RuvB hexamer acts as an ATP-dependent pump, pulling dsDNA into and through the RuvAB complex. HJ branch migration allows RuvC to scan DNA until it finds its consensus sequence, where it cleaves and resolves the cruciform DNA. In Rickettsia peacockii (strain Rustic), this protein is Holliday junction branch migration complex subunit RuvA.